Reading from the N-terminus, the 125-residue chain is Unclassified hydrophobin 8 (125 aa).

Residues 1 to 20 (MMFSKPVVLATTALATFAAA) form the signal peptide. 4 disulfides stabilise this stretch: Cys-31–Cys-105, Cys-38–Cys-99, Cys-39–Cys-90, and Cys-106–Cys-119.

Belongs to the fungal hydrophobin family. Self-assembles to form functional amyloid fibrils called rodlets. Self-assembly into fibrillar rodlets occurs spontaneously at hydrophobic:hydrophilic interfaces and the rodlets further associate laterally to form amphipathic monolayers.

The protein resides in the secreted. It localises to the cell wall. Functionally, aerial growth, conidiation, and dispersal of filamentous fungi in the environment rely upon a capability of their secreting small amphipathic proteins called hydrophobins (HPBs) with low sequence identity. Class I can self-assemble into an outermost layer of rodlet bundles on aerial cell surfaces, conferring cellular hydrophobicity that supports fungal growth, development and dispersal; whereas Class II form highly ordered films at water-air interfaces through intermolecular interactions but contribute nothing to the rodlet structure. Hydph8 is an unclassified hydrophobin involved in mycelial growth. The sequence is that of Unclassified hydrophobin 8 from Pleurotus ostreatus (strain PC15) (Oyster mushroom).